A 770-amino-acid polypeptide reads, in one-letter code: Integrin beta-2 (770 aa).

A signal peptide spans 1-22; the sequence is MLPQRPQLLLLAGLLSLQSVLS. Gln23 is modified (pyrrolidone carboxylic acid). Residues 23–701 lie on the Extracellular side of the membrane; sequence QECTKYKVST…DMLECVKGPN (679 aa). The 51-residue stretch at 24–74 folds into the PSI domain; it reads ECTKYKVSTCRDCIESGPSCAWCQKLNFTGQGEPDSTRCDTRAQLLSKGCP. 28 disulfides stabilise this stretch: Cys25–Cys43, Cys33–Cys447, Cys36–Cys62, Cys46–Cys73, Cys191–Cys198, Cys246–Cys286, Cys386–Cys400, Cys420–Cys445, Cys449–Cys467, Cys459–Cys470, Cys472–Cys481, Cys483–Cys514, Cys497–Cys512, Cys506–Cys517, Cys519–Cys534, Cys536–Cys559, Cys541–Cys557, Cys549–Cys562, Cys564–Cys573, Cys575–Cys598, Cys582–Cys596, Cys590–Cys601, Cys603–Cys612, Cys615–Cys618, Cys622–Cys663, Cys628–Cys647, Cys631–Cys643, and Cys671–Cys696. Residues Asn50 and Asn116 are each glycosylated (N-linked (GlcNAc...) asparagine). The VWFA domain maps to 124–363; that stretch reads GYPIDLYYLM…ELIKSAYNKL (240 aa). Residues Ser136 and Ser138 each coordinate Mg(2+). Ca(2+) is bound by residues Ser138, Asp141, Asp142, and Asp173. Ca(2+)-binding residues include Asn229, Asp231, Pro233, and Glu234. Glu234 lines the Mg(2+) pocket. Asn254 is a glycosylation site (N-linked (GlcNAc...) asparagine). Positions 264 and 347 each coordinate Ca(2+). The Cell attachment site motif lies at 397–399; sequence RGD. I-EGF domains lie at 449 to 482, 483 to 535, 536 to 574, and 575 to 613; these read CREASRDRGVCGGRGSMECGVCRCDAGYIGKNCE, CQTH…QFCE, CDNVNCERYDGQVCGGDKRGLCFCGACRCNDQYEGSACQ, and CLKSTQGCLNLNGVECSGRGRCRCNVCQCDPGYQPPLCI. Asn501 carries N-linked (GlcNAc...) asparagine glycosylation. Residue Asn642 is glycosylated (N-linked (GlcNAc...) asparagine). Residues 702–724 traverse the membrane as a helical segment; that stretch reads IAAIVGGTVGGVVLVGILLLAIW. At 725–770 the chain is on the cytoplasmic side; that stretch reads KALTHLSDLREYHRFEKEKLKSQWNNDNPLFKSATTTVMNPKFAES. Residues Ser746 and Ser757 each carry the phosphoserine modification. 2 positions are modified to phosphothreonine: Thr759 and Thr761.

It belongs to the integrin beta chain family. Heterodimer of an alpha and a beta subunit. The ITGB2 beta subunit associates with the ITGAL, ITGAM, ITGAX or ITGAD alpha subunits. Found in a complex with CD177 and ITGAM/CD11b. Interacts with FGR. Interacts with COPS5 and RANBP9. Interacts with FLNA (via filamin repeats 4, 9, 12, 17, 19, 21, and 23). Interacts with THBD. Post-translationally, both Ser-746 and Ser-757 become phosphorylated when T-cells are exposed to phorbol esters. Phosphorylation on Thr-759 (but not on Ser-757) allows interaction with 14-3-3 proteins.

It localises to the cell membrane. Its subcellular location is the membrane raft. Functionally, integrin ITGAL/ITGB2 is a receptor for ICAM1, ICAM2, ICAM3 and ICAM4. Integrin ITGAL/ITGB2 is also a receptor for the secreted form of ubiquitin-like protein ISG15; the interaction is mediated by ITGAL. Integrins ITGAM/ITGB2 and ITGAX/ITGB2 are receptors for the iC3b fragment of the third complement component and for fibrinogen. Integrin ITGAX/ITGB2 recognizes the sequence G-P-R in fibrinogen alpha-chain. Integrin ITGAM/ITGB2 recognizes P1 and P2 peptides of fibrinogen gamma chain. Integrin ITGAM/ITGB2 is also a receptor for factor X. Integrin ITGAD/ITGB2 is a receptor for ICAM3 and VCAM1. Contributes to natural killer cell cytotoxicity. Involved in leukocyte adhesion and transmigration of leukocytes including T-cells and neutrophils. Triggers neutrophil transmigration during lung injury through PTK2B/PYK2-mediated activation. Integrin ITGAL/ITGB2 in association with ICAM3, contributes to apoptotic neutrophil phagocytosis by macrophages. In association with alpha subunit ITGAM/CD11b, required for CD177-PRTN3-mediated activation of TNF primed neutrophils. In Ovis canadensis (Bighorn sheep), this protein is Integrin beta-2 (ITGB2).